The following is a 552-amino-acid chain: Putative transport protein HSM_0534 (552 aa).

The next 5 membrane-spanning stretches (helical) occupy residues 4 to 24, 28 to 48, 67 to 87, 95 to 115, and 157 to 177; these read IAIT…IGHW, GVGL…HFMN, LILF…ASLL, GLAT…YKVV, and MAYA…MWLI. 2 RCK C-terminal domains span residues 190–275 and 277–360; these read KQFQ…VIGE and IDMP…IIGN. 6 helical membrane-spanning segments follow: residues 370-390, 402-424, 438-458, 463-483, 495-515, and 529-549; these read MLPV…PFYI, AGGP…LYWF, IVLF…DTLV, LEWM…TGII, LCGL…ANAI, and VYPL…ILLW.

This sequence belongs to the AAE transporter (TC 2.A.81) family. YidE subfamily.

The protein localises to the cell membrane. The protein is Putative transport protein HSM_0534 of Histophilus somni (strain 2336) (Haemophilus somnus).